Here is a 680-residue protein sequence, read N- to C-terminus: MTASPDYLVVLFGITAGATGAKLGSDEKELILLLWKVVDLANKKVGQLHEVLVRPDQLELTEDCKEETKIDAENLSSAPQLDQALRQFNQSVSNELNIGVGTSFCLCTDGQLHIRQILHPEASKKNVLLPECFYSFFDLRKEFKKCCPGSPDIDKLDVAAMTESLNFEKSDSVSRYGASQVEDMGNIILAMISEPYNHRFSDPERVNYKFESGTCKMELIDDSTVVRARGLPWQSSDQDIARFFKGLNIAKGGAALCLNAQGRRNGEALVRFVSEEHRDLALQRHKHHMGTRYIEVYKATGEDFLKIAGGTSNEVAQFLSKENQVIVRMRGLPFTATAEEVVAFFGQHCPITGGKEGILFVTYPDGRPTGDAFVLFACEEYAQNALRKHKELLGKRYIELFRSTAAEVQQVLNRFSSAPLIPLPTPPIIPVLPQQFVPPTNVRDCIRLRGLPYAATIEDILDFLGEFSTDIRTHGVHMVLNHQGRPSGDAFIQMKSTDRAFMAAQKYHKKTMKDRYVEVFQCSAEEMNFVLMGGTLNRNGLSPPPCKLPCLSPPSYTFPAPTAVIPTEAAIYQPSLLLNPRALQPSTAYYPAGTQLFMNYTAYYPSPPGSPNSLGYFPTAANLSSVPPQPGTVVRMQGLAYNTGVKEILNFFQGYQYATEDGLVHTNDQARTLPKEWVCI.

RRM domains lie at 224-301 (TVVR…KATG), 325-405 (VIVR…RSTA), and 444-524 (DCIR…QCSA). Residue serine 542 is modified to Phosphoserine. Position 581 is an omega-N-methylarginine (arginine 581).

It belongs to the ESRP family. In terms of tissue distribution, epithelial cell-specific. Epithelial-specific expression in diverse tissues and organs with particularly notable levels of expression in skin and gastrointestinal epithelia.

It is found in the nucleus. In terms of biological role, mRNA splicing factor that regulates the formation of epithelial cell-specific isoforms. Specifically regulates the expression of FGFR2-IIIb, an epithelial cell-specific isoform of FGFR2. Also regulates the splicing of CD44, CTNND1, ENAH, 3 transcripts that undergo changes in splicing during the epithelial-to-mesenchymal transition (EMT). Acts by directly binding specific sequences in mRNAs. Binds the GU-rich sequence motifs in the ISE/ISS-3, a cis-element regulatory region present in the mRNA of FGFR2. Regulates splicing and expression of genes involved in inner ear development, auditory hair cell differentiation, and cell fate specification in the cochlear epithelium. The protein is Epithelial splicing regulatory protein 1 (Esrp1) of Mus musculus (Mouse).